The primary structure comprises 279 residues: 4-hydroxy-3-methylbut-2-enyl diphosphate reductase (279 aa).

Cys-12 contacts [4Fe-4S] cluster. (2E)-4-hydroxy-3-methylbut-2-enyl diphosphate is bound by residues His-36 and His-70. Positions 36 and 70 each coordinate dimethylallyl diphosphate. Residues His-36 and His-70 each coordinate isopentenyl diphosphate. Cys-92 provides a ligand contact to [4Fe-4S] cluster. His-120 lines the (2E)-4-hydroxy-3-methylbut-2-enyl diphosphate pocket. A dimethylallyl diphosphate-binding site is contributed by His-120. Residue His-120 participates in isopentenyl diphosphate binding. The Proton donor role is filled by Glu-122. Thr-158 contributes to the (2E)-4-hydroxy-3-methylbut-2-enyl diphosphate binding site. Cys-186 contributes to the [4Fe-4S] cluster binding site. 4 residues coordinate (2E)-4-hydroxy-3-methylbut-2-enyl diphosphate: Ser-214, Ser-215, Asn-216, and Ser-258. Positions 214, 215, 216, and 258 each coordinate dimethylallyl diphosphate. Ser-214, Ser-215, Asn-216, and Ser-258 together coordinate isopentenyl diphosphate.

It belongs to the IspH family. The cofactor is [4Fe-4S] cluster.

The catalysed reaction is isopentenyl diphosphate + 2 oxidized [2Fe-2S]-[ferredoxin] + H2O = (2E)-4-hydroxy-3-methylbut-2-enyl diphosphate + 2 reduced [2Fe-2S]-[ferredoxin] + 2 H(+). It catalyses the reaction dimethylallyl diphosphate + 2 oxidized [2Fe-2S]-[ferredoxin] + H2O = (2E)-4-hydroxy-3-methylbut-2-enyl diphosphate + 2 reduced [2Fe-2S]-[ferredoxin] + 2 H(+). It participates in isoprenoid biosynthesis; dimethylallyl diphosphate biosynthesis; dimethylallyl diphosphate from (2E)-4-hydroxy-3-methylbutenyl diphosphate: step 1/1. Its pathway is isoprenoid biosynthesis; isopentenyl diphosphate biosynthesis via DXP pathway; isopentenyl diphosphate from 1-deoxy-D-xylulose 5-phosphate: step 6/6. Functionally, catalyzes the conversion of 1-hydroxy-2-methyl-2-(E)-butenyl 4-diphosphate (HMBPP) into a mixture of isopentenyl diphosphate (IPP) and dimethylallyl diphosphate (DMAPP). Acts in the terminal step of the DOXP/MEP pathway for isoprenoid precursor biosynthesis. This is 4-hydroxy-3-methylbut-2-enyl diphosphate reductase from Campylobacter fetus subsp. fetus (strain 82-40).